The primary structure comprises 421 residues: UDP-N-acetylglucosamine 1-carboxyvinyltransferase (421 aa).

Residue 22–23 (KN) coordinates phosphoenolpyruvate. Residue arginine 94 coordinates UDP-N-acetyl-alpha-D-glucosamine. Catalysis depends on cysteine 118, which acts as the Proton donor. Cysteine 118 is subject to 2-(S-cysteinyl)pyruvic acid O-phosphothioketal. UDP-N-acetyl-alpha-D-glucosamine is bound by residues 123–127 (RPMDL), aspartate 308, and isoleucine 330.

This sequence belongs to the EPSP synthase family. MurA subfamily.

It is found in the cytoplasm. The catalysed reaction is phosphoenolpyruvate + UDP-N-acetyl-alpha-D-glucosamine = UDP-N-acetyl-3-O-(1-carboxyvinyl)-alpha-D-glucosamine + phosphate. It functions in the pathway cell wall biogenesis; peptidoglycan biosynthesis. Its function is as follows. Cell wall formation. Adds enolpyruvyl to UDP-N-acetylglucosamine. In Ruegeria pomeroyi (strain ATCC 700808 / DSM 15171 / DSS-3) (Silicibacter pomeroyi), this protein is UDP-N-acetylglucosamine 1-carboxyvinyltransferase.